The sequence spans 304 residues: Non-specific ribonucleoside hydrolase RihC (304 aa).

Histidine 233 is an active-site residue.

This sequence belongs to the IUNH family. RihC subfamily.

In terms of biological role, hydrolyzes both purine and pyrimidine ribonucleosides with a broad-substrate specificity. The polypeptide is Non-specific ribonucleoside hydrolase RihC (Klebsiella pneumoniae (strain 342)).